The primary structure comprises 892 residues: Alanine--tRNA ligase (892 aa).

Zn(2+)-binding residues include H574, H578, C676, and H680.

It belongs to the class-II aminoacyl-tRNA synthetase family. Zn(2+) is required as a cofactor.

It localises to the cytoplasm. It carries out the reaction tRNA(Ala) + L-alanine + ATP = L-alanyl-tRNA(Ala) + AMP + diphosphate. In terms of biological role, catalyzes the attachment of alanine to tRNA(Ala) in a two-step reaction: alanine is first activated by ATP to form Ala-AMP and then transferred to the acceptor end of tRNA(Ala). Also edits incorrectly charged Ser-tRNA(Ala) and Gly-tRNA(Ala) via its editing domain. The sequence is that of Alanine--tRNA ligase from Prochlorococcus marinus (strain SARG / CCMP1375 / SS120).